The primary structure comprises 448 residues: N-succinylarginine dihydrolase (448 aa).

Substrate-binding positions include 19–28 (GGLSYGNVAS), Asn-110, and 137–138 (HR). Residue Glu-174 is part of the active site. Arg-214 lines the substrate pocket. Residue His-250 is part of the active site. Residues Asp-252 and Asn-365 each contribute to the substrate site. Cys-371 functions as the Nucleophile in the catalytic mechanism.

It belongs to the succinylarginine dihydrolase family. Homodimer.

It catalyses the reaction N(2)-succinyl-L-arginine + 2 H2O + 2 H(+) = N(2)-succinyl-L-ornithine + 2 NH4(+) + CO2. It functions in the pathway amino-acid degradation; L-arginine degradation via AST pathway; L-glutamate and succinate from L-arginine: step 2/5. Its function is as follows. Catalyzes the hydrolysis of N(2)-succinylarginine into N(2)-succinylornithine, ammonia and CO(2). The sequence is that of N-succinylarginine dihydrolase from Pseudomonas syringae pv. tomato (strain ATCC BAA-871 / DC3000).